We begin with the raw amino-acid sequence, 637 residues long: Probable ATP-binding protein YheS (637 aa).

2 ABC transporter domains span residues 2 to 246 and 313 to 527; these read IVFS…AQQQ and LKME…KQEN. ATP-binding positions include 34–41 and 345–352; these read GKNGCGKS and GRNGAGKS. The segment at 523-559 is disordered; it reads QKQENQTDEAPKENANSAQARKDQKRREAELRAQTQP. The segment covering 542–553 has biased composition (basic and acidic residues); it reads ARKDQKRREAEL.

Belongs to the ABC transporter superfamily. ABCF family. YheS subfamily.

In terms of biological role, genetic data indicate it may be involved in ribosome assembly or function. Ectopic expression exacerbates the cold-sensitive growth phenotype of a bipA deletion. The protein is Probable ATP-binding protein YheS (yheS) of Escherichia coli O6:H1 (strain CFT073 / ATCC 700928 / UPEC).